The sequence spans 126 residues: Fluoride-specific ion channel FluC (126 aa).

Transmembrane regions (helical) follow at residues 5–25 (ILCV…FYFG), 34–54 (YIFI…GFVL), 71–91 (VTGL…NAVF), and 100–120 (FFLN…LGIY). Na(+) is bound by residues Gly-76 and Thr-79.

The protein belongs to the fluoride channel Fluc/FEX (TC 1.A.43) family.

Its subcellular location is the cell inner membrane. It catalyses the reaction fluoride(in) = fluoride(out). With respect to regulation, na(+) is not transported, but it plays an essential structural role and its presence is essential for fluoride channel function. Fluoride-specific ion channel. Important for reducing fluoride concentration in the cell, thus reducing its toxicity. The polypeptide is Fluoride-specific ion channel FluC (Campylobacter hominis (strain ATCC BAA-381 / DSM 21671 / CCUG 45161 / LMG 19568 / NCTC 13146 / CH001A)).